The primary structure comprises 521 residues: 2-isopropylmalate synthase (521 aa).

Residues 5 to 267 form the Pyruvate carboxyltransferase domain; that stretch reads VIIFDTTLRD…HTNIKHQEIH (263 aa). Mn(2+) is bound by residues D14, H202, H204, and N238. Residues 392 to 521 are regulatory domain; it reads KLNYLSVQSG…FAQKTVMETL (130 aa).

This sequence belongs to the alpha-IPM synthase/homocitrate synthase family. LeuA type 1 subfamily. Homodimer. It depends on Mn(2+) as a cofactor.

Its subcellular location is the cytoplasm. It carries out the reaction 3-methyl-2-oxobutanoate + acetyl-CoA + H2O = (2S)-2-isopropylmalate + CoA + H(+). Its pathway is amino-acid biosynthesis; L-leucine biosynthesis; L-leucine from 3-methyl-2-oxobutanoate: step 1/4. Functionally, catalyzes the condensation of the acetyl group of acetyl-CoA with 3-methyl-2-oxobutanoate (2-ketoisovalerate) to form 3-carboxy-3-hydroxy-4-methylpentanoate (2-isopropylmalate). The protein is 2-isopropylmalate synthase of Tolumonas auensis (strain DSM 9187 / NBRC 110442 / TA 4).